The primary structure comprises 604 residues: ATP-dependent RNA helicase DBP1 (604 aa).

The disordered stretch occupies residues Met-1 to Gly-79. Residues Ser-32 to Arg-45 are compositionally biased toward polar residues. The Q motif motif lies at Thr-138 to Lys-166. The Helicase ATP-binding domain occupies Ile-169–Leu-358. Residue Ala-182–Thr-189 coordinates ATP. The DEAD box signature appears at Asp-302–Asp-305. Positions Leu-386–Val-529 constitute a Helicase C-terminal domain. Residues Phe-535 to Ser-591 form a disordered region. The segment covering Asn-541 to Ser-552 has biased composition (low complexity). Residues Asn-553–Trp-565 show a composition bias toward basic and acidic residues.

This sequence belongs to the DEAD box helicase family. DDX3/DED1 subfamily.

Its subcellular location is the cytoplasm. The catalysed reaction is ATP + H2O = ADP + phosphate + H(+). ATP-binding RNA helicase involved in translation initiation. Remodels RNA in response to ADP and ATP concentrations by facilitating disruption, but also formation of RNA duplexes. Redundant to DED1, may be required in conditions in which DED1 expression is decreased. The chain is ATP-dependent RNA helicase DBP1 (DBP1) from Candida glabrata (strain ATCC 2001 / BCRC 20586 / JCM 3761 / NBRC 0622 / NRRL Y-65 / CBS 138) (Yeast).